The sequence spans 106 residues: Glutaredoxin-1 (106 aa).

Ala1 is subject to N-acetylalanine. Residues Gln2–Arg105 enclose the Glutaredoxin domain. Residue Lys8 is modified to N6-succinyllysine. 2 disulfide bridges follow: Cys22–Cys25 and Cys78–Cys82.

It belongs to the glutaredoxin family.

Its subcellular location is the cytoplasm. Functionally, has a glutathione-disulfide oxidoreductase activity in the presence of NADPH and glutathione reductase. Reduces low molecular weight disulfides and proteins. This Oryctolagus cuniculus (Rabbit) protein is Glutaredoxin-1 (GLRX).